The primary structure comprises 353 residues: Protein Wnt-11b-2 (353 aa).

A signal peptide spans 1 to 22 (MALIRHCVTLLLILCCSRLCGA). Asparagine 31, asparagine 38, and asparagine 88 each carry an N-linked (GlcNAc...) asparagine glycan. Disulfide bonds link cysteine 78–cysteine 89, cysteine 128–cysteine 136, cysteine 138–cysteine 155, cysteine 208–cysteine 222, and cysteine 210–cysteine 217. The O-palmitoleoyl serine; by PORCN moiety is linked to residue serine 214. 2 positions are modified to sulfotyrosine: tyrosine 274 and tyrosine 281. Cystine bridges form between cysteine 282-cysteine 313, cysteine 298-cysteine 308, cysteine 312-cysteine 352, cysteine 328-cysteine 343, cysteine 330-cysteine 340, and cysteine 335-cysteine 336. Asparagine 299 carries N-linked (GlcNAc...) asparagine glycosylation.

It belongs to the Wnt family. As to quaternary structure, homodimer. Secreted homodimers form a complex with wnt5a homodimers; tyrosine sulfation of both wnt11 and wnt5a by tpst1 is required for this interaction. Interacts with the transmembrane receptor fzd7/fz7. Interacts with lrp6 and ryk. Interacts with tdgf1/frl1. Interacts weakly with frzb1 and strongly with frzb2/crescent. Interaction with frzb2/crescent antagonizes wnt11 function in the neuroectoderm, but enhances it in mesodermal tissue. Post-translationally, glycosylation is required for protein secretion. Palmitoleoylation is required for efficient binding to frizzled receptors. Depalmitoleoylation leads to Wnt signaling pathway inhibition.

The protein localises to the secreted. It localises to the extracellular space. It is found in the extracellular matrix. Functionally, ligand for the frizzled7 transmembrane receptor. Primarily acts via non-canonical Wnt pathways mediated by either Ca(2+) and PKC, or by JNK and dvl2/dsh. Depending on the cellular context, can also signal via the canonical Wnt pathway mediated by beta-catenin and dvl2/dsh. May also inhibit canonical Wnt signaling. Maternally initiates dorsal/ventral axis formation by a canonical route, which signals via lrp6. In a complex with wnt5a, activates the canonical and non-canonical processes involved in axis formation. In the non-canonical pathway, acts through fzd7/fz7 to induce phosphorylation of dvl2/dsh. Signals through a non-canonical Wnt pathway to regulate convergent extension movements during gastrulation. Interactions with the secreted Wnt antagonist sfrp5 to coordinate foregut development, acting via a non-canonical wnt pathway whereby sfrp5 restricts wnt11b activity to prevent inappropriate foregut formation. Mediates cardiogenesis via non-canonical Wnt signaling involving JNK-activation and PKC. Acts redundantly with wnt11/wnt11r during pronephros induction. The polypeptide is Protein Wnt-11b-2 (Xenopus tropicalis (Western clawed frog)).